A 742-amino-acid polypeptide reads, in one-letter code: ATP-dependent RNA helicase DBP7 (742 aa).

Residues 45–100 (GKTVSRKRKANTTGDEGIIPGRGENSIKKLHKESSYSSEEQEKYKGRNAHNTQGRT) form a disordered region. A Q motif motif is present at residues 143-172 (DQFASLGVTSLLVSHLEQKMRIKKPTSIQK). Residues 178 to 372 (IIGNAGKNDF…NVALKDYKLI (195 aa)) enclose the Helicase ATP-binding domain. 191–198 (AQTGSGKT) contacts ATP. The short motif at 307–310 (DEGD) is the DEAD box element. The region spanning 405 to 605 (TLAATLNNIT…ILMPAFKDVN (201 aa)) is the Helicase C-terminal domain. Residues 701–726 (AMGLQSSKDGNSEKKPTKENSKNKMF) form a disordered region. Over residues 710 to 722 (GNSEKKPTKENSK) the composition is skewed to basic and acidic residues.

This sequence belongs to the DEAD box helicase family. DDX31/DBP7 subfamily.

Its subcellular location is the nucleus. It is found in the nucleolus. The enzyme catalyses ATP + H2O = ADP + phosphate + H(+). Functionally, ATP-binding RNA helicase involved in the biogenesis of 60S ribosomal subunits and is required for the normal formation of 25S and 5.8S rRNAs. This chain is ATP-dependent RNA helicase DBP7 (DBP7), found in Saccharomyces cerevisiae (strain YJM789) (Baker's yeast).